The following is a 124-amino-acid chain: UPF0231 protein Shewana3_0655 (124 aa).

It belongs to the UPF0231 family.

The protein is UPF0231 protein Shewana3_0655 of Shewanella sp. (strain ANA-3).